The chain runs to 66 residues: Pancreatic polypeptide prohormone (66 aa).

Tyrosine amide is present on Tyr36. The propeptide occupies 60 to 66 (ELSPMDV).

It belongs to the NPY family.

It localises to the secreted. Functionally, hormone secreted by pancreatic cells that acts as a regulator of pancreatic and gastrointestinal functions probably by signaling through the G protein-coupled receptor NPY4R2. The protein is Pancreatic polypeptide prohormone (PPY) of Felis catus (Cat).